The sequence spans 720 residues: Translation initiation factor IF-2 (720 aa).

Residues 48–138 (KKFKASQAKD…NEVEETKEMP (91 aa)) form a disordered region. 2 stretches are compositionally biased toward low complexity: residues 60–75 (KQNT…NKQN) and 99–113 (KGKQ…NKNQ). Residues 114–123 (KNNKNKKNNK) show a composition bias toward basic residues. The 170-residue stretch at 222–391 (ERPAVVTIMG…GLVAEVQELK (170 aa)) folds into the tr-type G domain. The tract at residues 231 to 238 (GHVDHGKT) is G1. A GTP-binding site is contributed by 231-238 (GHVDHGKT). Residues 256–260 (GITQH) form a G2 region. Residues 277–280 (DTPG) are G3. Residues 277–281 (DTPGH) and 331–334 (NKID) each bind GTP. The interval 331-334 (NKID) is G4. The G5 stretch occupies residues 367–369 (SAL).

The protein belongs to the TRAFAC class translation factor GTPase superfamily. Classic translation factor GTPase family. IF-2 subfamily.

It is found in the cytoplasm. Its function is as follows. One of the essential components for the initiation of protein synthesis. Protects formylmethionyl-tRNA from spontaneous hydrolysis and promotes its binding to the 30S ribosomal subunits. Also involved in the hydrolysis of GTP during the formation of the 70S ribosomal complex. The sequence is that of Translation initiation factor IF-2 from Staphylococcus epidermidis (strain ATCC 35984 / DSM 28319 / BCRC 17069 / CCUG 31568 / BM 3577 / RP62A).